A 696-amino-acid polypeptide reads, in one-letter code: Tensin-4 (696 aa).

The N-terminal stretch at 1–14 is a signal peptide; sequence MSSSLLAGGHMVSL. Disordered regions lie at residues 157–246, 271–344, and 356–416; these read LDGP…RAPQ, SLPH…CPAS, and LING…KDMQ. The segment covering 192-203 has biased composition (polar residues); that stretch reads SSSNESLIFSGN. Phosphoserine is present on serine 230. A compositionally biased stretch (low complexity) spans 271 to 304; that stretch reads SLPHSSLSSYPSSSRSLGSPASSSSSLHSLDRGS. Composition is skewed to polar residues over residues 326-344 and 372-397; these read QAVQ…CPAS and PGHQ…SPSK. In terms of domain architecture, SH2 spans 429–536; the sequence is WFKPSITREQ…ALPCKLTIPQ (108 aa). Positions 563 to 690 constitute a PTB domain; it reads CHTLYLSSVS…QVISLVTALL (128 aa).

The protein belongs to the PTEN phosphatase protein family. Interacts (via SH2 domain) with Rho GTPase-activating protein DLC1 (via C-terminus); the interaction is independent of DLC1 tyrosine phosphorylation. Interacts with integrin ITGB1; the interaction displaces tensin TNS3 from the ITGB1 cytoplasmic tail and promotes ITGB1 stability. Interacts (via SH2 domain) with E3 ubiquitin-protein ligase CBL (phosphorylated on 'Tyr-780'); the interaction is enhanced in the presence of EGF and reduces interaction of CBL with EGFR. Interacts (via SH2 domain) with receptor tyrosine kinase MET (when phosphorylated); the interaction increases MET protein stability.

It is found in the cell junction. The protein resides in the focal adhesion. The protein localises to the cytoplasm. Its subcellular location is the cytoskeleton. In terms of biological role, promotes EGF-induced cell migration by displacing tensin TNS3 from the cytoplasmic tail of integrin ITGB1 which results in dissociation of TNS3 from focal adhesions, disassembly of actin stress fibers and initiation of cell migration. Suppresses ligand-induced degradation of EGFR by reducing EGFR ubiquitination in the presence of EGF. Increases MET protein stability by inhibiting MET endocytosis and subsequent lysosomal degradation which leads to increased cell survival, proliferation and migration. The polypeptide is Tensin-4 (Tns4) (Mus musculus (Mouse)).